Consider the following 688-residue polypeptide: Protein SDA1 homolog (688 aa).

Phosphoserine is present on residues S232, S234, and S236. Positions 254–318 form a coiled coil; sequence KKSSKNKKKL…ERFEVKMMLM (65 aa). Over residues 484 to 498 the composition is skewed to acidic residues; that stretch reads VENEEENAEGDEDGW. Positions 484–524 are disordered; that stretch reads VENEEENAEGDEDGWESASLSDEADSDGEWVDVHHSSDEEQ. A compositionally biased stretch (basic and acidic residues) spans 514 to 524; the sequence is VDVHHSSDEEQ. Phosphoserine occurs at positions 586 and 596. Residues 605-688 are disordered; it reads KKPKSDKETR…ALLKKRKRMK (84 aa). Basic and acidic residues predominate over residues 668 to 681; that stretch reads SFREKQLALRDALL.

This sequence belongs to the SDA1 family.

The protein localises to the nucleus. It localises to the nucleolus. Required for 60S pre-ribosomal subunits export to the cytoplasm. In Bos taurus (Bovine), this protein is Protein SDA1 homolog (SDAD1).